Consider the following 98-residue polypeptide: Tax1-binding protein 3 (98 aa).

The residue at position 2 (Ser2) is an N-acetylserine. In terms of domain architecture, PDZ spans 12–87 (VVQRVEIHKL…VVRLLVTRQS (76 aa)).

Interacts (via its PDZ domain) with GLS2. Interacts (via its PDZ domain) with RTKN (via the C-terminal region); this interaction facilitates Rho-mediated activation of the FOS serum response element (SRE). Interacts (via PDZ domain) with ARHGEF16. Interacts (via PDZ domain) with KCNJ4 (via C-terminus). Competes with LIN7A for KCNJ4 binding. Interacts (via its PDZ domain) with CTNNB1; this interaction inhibits the transcriptional activity of CTNNB1. Interacts with ADGRB2. In terms of tissue distribution, detected in kidney distal convoluted tubules (at protein level).

It is found in the cytoplasm. The protein resides in the nucleus. The protein localises to the cell membrane. May regulate a number of protein-protein interactions by competing for PDZ domain binding sites. Binds CTNNB1 and may thereby act as an inhibitor of the Wnt signaling pathway. Competes with LIN7A for KCNJ4 binding, and thereby promotes KCNJ4 internalization. May play a role in the Rho signaling pathway. The polypeptide is Tax1-binding protein 3 (Rattus norvegicus (Rat)).